Consider the following 514-residue polypeptide: Peptide chain release factor 3 (514 aa).

One can recognise a tr-type G domain in the interval 8 to 268 (KKRRTFAIIS…TFLEFAPEPH (261 aa)). GTP is bound by residues 17-24 (SHPDAGKT), 85-89 (DTPGH), and 139-142 (NKLD).

It belongs to the TRAFAC class translation factor GTPase superfamily. Classic translation factor GTPase family. PrfC subfamily.

The protein localises to the cytoplasm. Increases the formation of ribosomal termination complexes and stimulates activities of RF-1 and RF-2. It binds guanine nucleotides and has strong preference for UGA stop codons. It may interact directly with the ribosome. The stimulation of RF-1 and RF-2 is significantly reduced by GTP and GDP, but not by GMP. This chain is Peptide chain release factor 3, found in Streptococcus pyogenes serotype M1.